Here is a 1328-residue protein sequence, read N- to C-terminus: Tubulin polyglutamylase TTLL5 (1328 aa).

Residues 1-22 (MPVVMARDLEETASSSEDEDLA) are disordered. In terms of domain architecture, TTL spans 62-407 (RYHLSYKIVR…VCQDPAQRTS (346 aa)). Residues lysine 180, 186–187 (RG), 208–211 (SRYI), and 221–223 (KFD) contribute to the ATP site. Arginine 186 contacts a protein. Arginine 247 serves as a coordination point for L-glutamate. Position 268–269 (268–269 (TN)) interacts with ATP. Tyrosine 270, serine 271, and lysine 293 together coordinate L-glutamate. Mg(2+) is bound by residues aspartate 353, glutamate 366, and asparagine 368. The tract at residues 378–488 (PLDLKIKASM…RGGFIRIFPT (111 aa)) is c-MTBD region. Lysine 384 serves as a coordination point for L-glutamate. Disordered regions lie at residues 411 to 436 (IYPS…SASD), 585 to 631 (AQPA…QAKY), 834 to 853 (HSKS…KGDH), 948 to 975 (PALL…PAGL), 1006 to 1032 (SSAK…EGED), 1085 to 1129 (RSSA…LQTG), and 1212 to 1271 (RISS…QLNG). The span at 420–432 (RNPFQKPQRTRPL) shows a compositional bias: polar residues. Residues 597-617 (ESEEEEEVGLDNDDEEQEASQ) show a composition bias toward acidic residues. Residues 838–847 (SKNSSSYSDS) are compositionally biased toward low complexity. Polar residues-rich tracts occupy residues 1116–1128 (THSS…SLQT), 1214–1227 (SSAT…NTLP), 1234–1248 (PNSS…SNHK), and 1257–1271 (QRAS…QLNG).

It belongs to the tubulin--tyrosine ligase family. As to quaternary structure, interacts with the transcriptional coactivators NCOA1/SRC-1 and NCOA2/TIF2. The cofactor is Mg(2+). In terms of tissue distribution, highly expressed in brain, kidney, liver, spleen and testis. Expressed in heart, lung, muscle and trachea.

Its subcellular location is the cell projection. The protein localises to the cilium. It is found in the cytoplasm. It localises to the cytoskeleton. The protein resides in the cilium basal body. Its subcellular location is the nucleus. It carries out the reaction L-glutamyl-[protein] + L-glutamate + ATP = gamma-L-glutamyl-L-glutamyl-[protein] + ADP + phosphate + H(+). The enzyme catalyses (L-glutamyl)(n)-gamma-L-glutamyl-L-glutamyl-[protein] + L-glutamate + ATP = (L-glutamyl)(n+1)-gamma-L-glutamyl-L-glutamyl-[protein] + ADP + phosphate + H(+). In terms of biological role, polyglutamylase which modifies tubulin, generating polyglutamate side chains on the gamma-carboxyl group of specific glutamate residues within the C-terminal tail of tubulin. Preferentially mediates ATP-dependent initiation step of the polyglutamylation reaction over the elongation step. Preferentially modifies the alpha-tubulin tail over a beta-tail. Required for CCSAP localization to both polyglutamylated spindle and cilia microtubules. Increases the effects of transcriptional coactivator NCOA2/TIF2 in glucocorticoid receptor-mediated repression and induction and in androgen receptor-mediated induction. This chain is Tubulin polyglutamylase TTLL5, found in Mus musculus (Mouse).